The chain runs to 424 residues: Chloroquine resistance transporter (424 aa).

Residues M1–N58 are Cytoplasmic-facing. The helical transmembrane segment at I59–A79 threads the bilayer. The Vacuolar segment spans residues K80 to S90. N88 carries an N-linked (GlcNAc...) asparagine glycan. Residues F91–L111 traverse the membrane as a helical segment. Residues F112 to N127 lie on the Cytoplasmic side of the membrane. The helical transmembrane segment at L128 to L148 threads the bilayer. The Vacuolar segment spans residues T149 to N154. Residues I155–L175 form a helical membrane-spanning segment. At R176 to R178 the chain is on the cytoplasmic side. A helical transmembrane segment spans residues Y179–M199. Over K200–N209 the chain is Vacuolar. The chain crosses the membrane as a helical span at residues S210–T230. The Cytoplasmic segment spans residues R231–M248. The chain crosses the membrane as a helical span at residues V249–L269. Residues K270–K317 are Vacuolar-facing. 2 cysteine pairs are disulfide-bonded: C289/C312 and C301/C309. Residues T318–D338 traverse the membrane as a helical segment. The Cytoplasmic segment spans residues K339–T346. A helical transmembrane segment spans residues I347 to G367. The Vacuolar portion of the chain corresponds to D368–D377. The chain crosses the membrane as a helical span at residues F378–L398. Residues E399 to Q424 lie on the Cytoplasmic side of the membrane.

It belongs to the CRT-like transporter family. In terms of assembly, monomer.

The protein localises to the vacuole membrane. The catalysed reaction is L-arginine(in) = L-arginine(out). The enzyme catalyses L-lysine(in) = L-lysine(out). It catalyses the reaction L-histidine(out) = L-histidine(in). It carries out the reaction histamine(out) = histamine(in). The catalysed reaction is spermidine(in) = spermidine(out). The enzyme catalyses Fe(3+)(in) = Fe(3+)(out). It catalyses the reaction Fe(2+)(in) = Fe(2+)(out). With respect to regulation, transporter activity is trans-stimulated by host-derived peptides containing 4-11 amino acids. Trans-stimulation by hemoglobin-derived peptide VDPVNF is pH-dependent and sodium-independent. Saquinavir trans-stimulates transport of hemoglobin-derived peptide VDPVNF. Protons are non-competitive inhibitors of chloroquine transport. Nutrient transporter. Substrate transport is pH-dependent. Can transport arginine, lysine, histidine, peptides, histamine and spermidine. May modulate activity of endogenous transporters. Involved in maintaining the osmotic homeostasis of the digestive vacuole. Required for the asexual intraerythrocytic proliferation of parasites. Can transport Fe(2+) and Fe(3+). This is Chloroquine resistance transporter from Plasmodium falciparum.